Here is a 286-residue protein sequence, read N- to C-terminus: 4-hydroxybenzoate octaprenyltransferase (286 aa).

Transmembrane regions (helical) follow at residues 20-40 (IGILLLLWPTLWGLWLAADGM), 43-63 (PMILVIFVLGTILMRSAGCAI), 83-103 (LATGIISSREALLVAAGLSLC), 135-155 (FFAMPQAYLGIAFSFGIPMAF), 160-180 (GTVPPLAWLLVLANLFWVIAY), 209-229 (VAGILLCHITFLSILTYAGIL), and 234-254 (IWFYGALLVALGLVIVQYTMI).

It belongs to the UbiA prenyltransferase family. Requires Mg(2+) as cofactor.

It is found in the cell inner membrane. The catalysed reaction is all-trans-octaprenyl diphosphate + 4-hydroxybenzoate = 4-hydroxy-3-(all-trans-octaprenyl)benzoate + diphosphate. The protein operates within cofactor biosynthesis; ubiquinone biosynthesis. Its function is as follows. Catalyzes the prenylation of para-hydroxybenzoate (PHB) with an all-trans polyprenyl group. Mediates the second step in the final reaction sequence of ubiquinone-8 (UQ-8) biosynthesis, which is the condensation of the polyisoprenoid side chain with PHB, generating the first membrane-bound Q intermediate 3-octaprenyl-4-hydroxybenzoate. The chain is 4-hydroxybenzoate octaprenyltransferase from Nitrosomonas eutropha (strain DSM 101675 / C91 / Nm57).